Reading from the N-terminus, the 340-residue chain is Anthranilate phosphoribosyltransferase (340 aa).

5-phospho-alpha-D-ribose 1-diphosphate is bound by residues glycine 84, glycine 87 to aspartate 88, threonine 92, asparagine 94 to threonine 97, lysine 112 to serine 120, and serine 124. Glycine 84 is an anthranilate binding site. Serine 96 is a binding site for Mg(2+). Arginine 170 contributes to the anthranilate binding site. Residues aspartate 228 and glutamate 229 each contribute to the Mg(2+) site.

Belongs to the anthranilate phosphoribosyltransferase family. Homodimer. Mg(2+) serves as cofactor.

The catalysed reaction is N-(5-phospho-beta-D-ribosyl)anthranilate + diphosphate = 5-phospho-alpha-D-ribose 1-diphosphate + anthranilate. Its pathway is amino-acid biosynthesis; L-tryptophan biosynthesis; L-tryptophan from chorismate: step 2/5. Catalyzes the transfer of the phosphoribosyl group of 5-phosphorylribose-1-pyrophosphate (PRPP) to anthranilate to yield N-(5'-phosphoribosyl)-anthranilate (PRA). This chain is Anthranilate phosphoribosyltransferase, found in Psychromonas ingrahamii (strain DSM 17664 / CCUG 51855 / 37).